A 131-amino-acid polypeptide reads, in one-letter code: Small ribosomal subunit protein uS8 (131 aa).

Belongs to the universal ribosomal protein uS8 family. In terms of assembly, part of the 30S ribosomal subunit. Contacts proteins S5 and S12.

Functionally, one of the primary rRNA binding proteins, it binds directly to 16S rRNA central domain where it helps coordinate assembly of the platform of the 30S subunit. The protein is Small ribosomal subunit protein uS8 of Sulfurovum sp. (strain NBC37-1).